The following is a 280-amino-acid chain: Acyl-[acyl-carrier-protein]--UDP-N-acetylglucosamine O-acyltransferase (280 aa).

This sequence belongs to the transferase hexapeptide repeat family. LpxA subfamily. As to quaternary structure, homotrimer.

Its subcellular location is the cytoplasm. The enzyme catalyses a (3R)-hydroxyacyl-[ACP] + UDP-N-acetyl-alpha-D-glucosamine = a UDP-3-O-[(3R)-3-hydroxyacyl]-N-acetyl-alpha-D-glucosamine + holo-[ACP]. It participates in glycolipid biosynthesis; lipid IV(A) biosynthesis; lipid IV(A) from (3R)-3-hydroxytetradecanoyl-[acyl-carrier-protein] and UDP-N-acetyl-alpha-D-glucosamine: step 1/6. Its function is as follows. Involved in the biosynthesis of lipid A, a phosphorylated glycolipid that anchors the lipopolysaccharide to the outer membrane of the cell. This Chlamydia trachomatis serovar L2 (strain ATCC VR-902B / DSM 19102 / 434/Bu) protein is Acyl-[acyl-carrier-protein]--UDP-N-acetylglucosamine O-acyltransferase.